Reading from the N-terminus, the 775-residue chain is Kojibiose phosphorylase (775 aa).

Residue 361 to 362 coordinates substrate; sequence WD. The Proton donor role is filled by glutamate 501. A substrate-binding site is contributed by 614-615; sequence KQ.

Belongs to the glycosyl hydrolase 65 family. Homohexamer.

The enzyme catalyses kojibiose + phosphate = beta-D-glucose 1-phosphate + D-glucose. Inhibited by Hg(2+) and Pb(2+). In terms of biological role, catalyzes the reversible phosphorolysis of kojibiose into beta-D-glucose 1-phosphate (Glc1P) and D-glucose. Can act with alpha-1,2-oligoglucans, such as selaginose, but more slowly. Inactive when disaccharides with linkages other than alpha-1,2 linkages, such as sophorose, trehalose, neotrehalose, nigerose, laminaribiose, maltose, cellobiose, isomaltose, gentiobiose, sucrose and lactose, are used as substrates. In contrast, shows broad specificity for the reverse reaction. Various monosaccharides and disaccharides having a glucosyl residue at the non-reducing end are effective acceptors. This Thermoanaerobacter brockii (Thermoanaerobium brockii) protein is Kojibiose phosphorylase.